The following is a 258-amino-acid chain: tRNA pseudouridine synthase A (258 aa).

The Nucleophile role is filled by Asp55. Tyr113 is a binding site for substrate.

The protein belongs to the tRNA pseudouridine synthase TruA family. In terms of assembly, homodimer.

It catalyses the reaction uridine(38/39/40) in tRNA = pseudouridine(38/39/40) in tRNA. Functionally, formation of pseudouridine at positions 38, 39 and 40 in the anticodon stem and loop of transfer RNAs. The chain is tRNA pseudouridine synthase A from Limosilactobacillus fermentum (strain NBRC 3956 / LMG 18251) (Lactobacillus fermentum).